The primary structure comprises 206 residues: Small ribosomal subunit protein uS5 (206 aa).

Residues 1–15 are compositionally biased toward polar residues; that stretch reads MTDTPTKQETQSNKD. Residues 1 to 50 form a disordered region; that stretch reads MTDTPTKQETQSNKDNVPGAIPVEQKKNNRNDRKRNRRGDSKNLERDSDW. The span at 38–50 shows a compositional bias: basic and acidic residues; it reads RGDSKNLERDSDW. Residues 50-113 enclose the S5 DRBM domain; it reads WQERVVQIRR…SDGKKNLVRV (64 aa).

Belongs to the universal ribosomal protein uS5 family. Part of the 30S ribosomal subunit. Contacts proteins S4 and S8.

In terms of biological role, with S4 and S12 plays an important role in translational accuracy. Located at the back of the 30S subunit body where it stabilizes the conformation of the head with respect to the body. This chain is Small ribosomal subunit protein uS5, found in Prochlorococcus marinus (strain MIT 9215).